The sequence spans 375 residues: Carbamoyl phosphate synthase small chain (375 aa).

Residues 1 to 186 (MRALLALEDG…LEPGGCAWVG (186 aa)) are CPSase. L-glutamine contacts are provided by serine 45, glycine 238, and glycine 240. A Glutamine amidotransferase type-1 domain is found at 190 to 375 (RLVVYDFGIK…RNMVREAAGC (186 aa)). The Nucleophile role is filled by cysteine 265. L-glutamine is bound by residues leucine 266, glutamine 269, asparagine 307, glycine 309, and phenylalanine 310. Active-site residues include histidine 348 and glutamate 350.

Belongs to the CarA family. Composed of two chains; the small (or glutamine) chain promotes the hydrolysis of glutamine to ammonia, which is used by the large (or ammonia) chain to synthesize carbamoyl phosphate. Tetramer of heterodimers (alpha,beta)4.

It carries out the reaction hydrogencarbonate + L-glutamine + 2 ATP + H2O = carbamoyl phosphate + L-glutamate + 2 ADP + phosphate + 2 H(+). It catalyses the reaction L-glutamine + H2O = L-glutamate + NH4(+). The protein operates within amino-acid biosynthesis; L-arginine biosynthesis; carbamoyl phosphate from bicarbonate: step 1/1. It functions in the pathway pyrimidine metabolism; UMP biosynthesis via de novo pathway; (S)-dihydroorotate from bicarbonate: step 1/3. Small subunit of the glutamine-dependent carbamoyl phosphate synthetase (CPSase). CPSase catalyzes the formation of carbamoyl phosphate from the ammonia moiety of glutamine, carbonate, and phosphate donated by ATP, constituting the first step of 2 biosynthetic pathways, one leading to arginine and/or urea and the other to pyrimidine nucleotides. The small subunit (glutamine amidotransferase) binds and cleaves glutamine to supply the large subunit with the substrate ammonia. This chain is Carbamoyl phosphate synthase small chain, found in Nitratidesulfovibrio vulgaris (strain ATCC 29579 / DSM 644 / CCUG 34227 / NCIMB 8303 / VKM B-1760 / Hildenborough) (Desulfovibrio vulgaris).